The chain runs to 91 residues: Large ribosomal subunit protein bL31 (91 aa).

The tract at residues 62–91 (RRKYSGTKPQQTAKGKKAAPKSTPKTNKKG) is disordered.

This sequence belongs to the bacterial ribosomal protein bL31 family. Type A subfamily. Part of the 50S ribosomal subunit.

Functionally, binds the 23S rRNA. This chain is Large ribosomal subunit protein bL31, found in Thermosynechococcus vestitus (strain NIES-2133 / IAM M-273 / BP-1).